The chain runs to 117 residues: MQNIPPQVQAMLGQLESYQQQLQLVIQQKQKVQADLNEAKKALEEIEKLTDDAVIYKTVGTLIVKTTKEKALQELKEKVETLEVRLNALNRQEQKINEKIKELTQKIQAALRPPTAG.

This sequence belongs to the prefoldin subunit beta family. In terms of assembly, heterohexamer of two alpha and four beta subunits.

It localises to the cytoplasm. Functionally, molecular chaperone capable of stabilizing a range of proteins. Seems to fulfill an ATP-independent, HSP70-like function in archaeal de novo protein folding. This chain is Prefoldin subunit beta, found in Pyrococcus furiosus (strain ATCC 43587 / DSM 3638 / JCM 8422 / Vc1).